The chain runs to 309 residues: Ribonuclease Z (309 aa).

7 residues coordinate Zn(2+): His-64, His-66, Asp-68, His-69, His-141, Asp-209, and His-267. Catalysis depends on Asp-68, which acts as the Proton acceptor.

This sequence belongs to the RNase Z family. In terms of assembly, homodimer. The cofactor is Zn(2+).

The enzyme catalyses Endonucleolytic cleavage of RNA, removing extra 3' nucleotides from tRNA precursor, generating 3' termini of tRNAs. A 3'-hydroxy group is left at the tRNA terminus and a 5'-phosphoryl group is left at the trailer molecule.. In terms of biological role, zinc phosphodiesterase, which displays some tRNA 3'-processing endonuclease activity. Probably involved in tRNA maturation, by removing a 3'-trailer from precursor tRNA. The chain is Ribonuclease Z from Picrophilus torridus (strain ATCC 700027 / DSM 9790 / JCM 10055 / NBRC 100828 / KAW 2/3).